We begin with the raw amino-acid sequence, 241 residues long: GDSL esterase/lipase At5g45920 (241 aa).

Serine 12 serves as the catalytic Nucleophile. Catalysis depends on residues aspartate 189 and histidine 192.

Belongs to the 'GDSL' lipolytic enzyme family.

The chain is GDSL esterase/lipase At5g45920 from Arabidopsis thaliana (Mouse-ear cress).